We begin with the raw amino-acid sequence, 581 residues long: Arginine--tRNA ligase (581 aa).

The 'HIGH' region motif lies at 126–136; that stretch reads PNLAKEMHVGH.

This sequence belongs to the class-I aminoacyl-tRNA synthetase family. As to quaternary structure, monomer.

It localises to the cytoplasm. The enzyme catalyses tRNA(Arg) + L-arginine + ATP = L-arginyl-tRNA(Arg) + AMP + diphosphate. The chain is Arginine--tRNA ligase from Shewanella sp. (strain MR-7).